The following is a 172-amino-acid chain: Protein-export protein SecB (172 aa).

It belongs to the SecB family. In terms of assembly, homotetramer, a dimer of dimers. One homotetramer interacts with 1 SecA dimer.

It is found in the cytoplasm. In terms of biological role, one of the proteins required for the normal export of preproteins out of the cell cytoplasm. It is a molecular chaperone that binds to a subset of precursor proteins, maintaining them in a translocation-competent state. It also specifically binds to its receptor SecA. In Dinoroseobacter shibae (strain DSM 16493 / NCIMB 14021 / DFL 12), this protein is Protein-export protein SecB.